The following is a 324-amino-acid chain: N-acetyl-gamma-glutamyl-phosphate reductase (324 aa).

Cysteine 131 is an active-site residue.

This sequence belongs to the NAGSA dehydrogenase family. Type 1 subfamily.

The protein localises to the cytoplasm. The enzyme catalyses N-acetyl-L-glutamate 5-semialdehyde + phosphate + NADP(+) = N-acetyl-L-glutamyl 5-phosphate + NADPH + H(+). It participates in amino-acid biosynthesis; L-arginine biosynthesis; N(2)-acetyl-L-ornithine from L-glutamate: step 3/4. Catalyzes the NADPH-dependent reduction of N-acetyl-5-glutamyl phosphate to yield N-acetyl-L-glutamate 5-semialdehyde. The polypeptide is N-acetyl-gamma-glutamyl-phosphate reductase (Bradyrhizobium sp. (strain ORS 278)).